A 529-amino-acid chain; its full sequence is MKPHLKQWRQRMLFGIFAWGLLFLLIFIYFTDSNPAEPVPSSLSFLETRRLLPVQGKQRAIMGAAHEPSPPGGLDARQALPRAHPAGSFHAGPGDLQKWAQSQDGFEHKEFFSSQVGRKSQSAFYPEDDDYFFAAGQPGWHSHTQGTLGFPSPGEPGPREGAFPAAQVQRRRVKKRHRRQRRSHVLEEGDDGDRLYSSMSRAFLYRLWKGNVSSKMLNPRLQKAMKDYLTANKHGVRFRGKREAGLSRAQLLCQLRSRARVRTLDGTEAPFSALGWRRLVPAVPLSQLHPRGLRSCAVVMSAGAILNSSLGEEIDSHDAVLRFNSAPTRGYEKDVGNKTTIRIINSQILTNPSHHFIDSSLYKDVILVAWDPAPYSANLNLWYKKPDYNLFTPYIQHRQRNPNQPFYILHPKFIWQLWDIIQENTKEKIQPNPPSSGFIGILIMMSMCREVHVYEYIPSVRQTELCHYHELYYDAACTLGAYHPLLYEKLLVQRLNMGTQGDLHRKGKVVLPGFQAVHCPAPSPVIPHS.

Residues 1 to 11 are Cytoplasmic-facing; it reads MKPHLKQWRQR. A helical; Signal-anchor for type II membrane protein transmembrane segment spans residues 12–32; it reads MLFGIFAWGLLFLLIFIYFTD. Over 33-529 the chain is Lumenal; sequence SNPAEPVPSS…PAPSPVIPHS (497 aa). S69 carries an O-linked (GalNAc...) serine glycan. The N-linked (GlcNAc...) asparagine glycan is linked to N211. Intrachain disulfides connect C253-C519, C296-C448, and C466-C477.

It belongs to the glycosyltransferase 29 family. In terms of processing, O-glycosylated. In terms of tissue distribution, weakly expressed in some tissues, such as small intestine, colon and fetal brain.

It localises to the golgi apparatus. The protein localises to the golgi stack membrane. The enzyme catalyses a beta-D-galactoside + CMP-N-acetyl-beta-neuraminate = an N-acetyl-alpha-neuraminyl-(2-&gt;6)-beta-D-galactosyl derivative + CMP + H(+). In terms of biological role, transfers sialic acid from the donor of substrate CMP-sialic acid to galactose containing acceptor substrates. Has alpha-2,6-sialyltransferase activity toward oligosaccharides that have the Gal-beta-1,4-GlcNAc sequence at the non-reducing end of their carbohydrate groups, but it has weak or no activities toward glycoproteins and glycolipids. The chain is Beta-galactoside alpha-2,6-sialyltransferase 2 (ST6GAL2) from Homo sapiens (Human).